Here is a 1362-residue protein sequence, read N- to C-terminus: DNA-directed RNA polymerase subunit beta' (1362 aa).

Residues 1–14 show a composition bias toward basic residues; the sequence is MTSSSKSRKSKSSK. Residues 1-39 are disordered; the sequence is MTSSSKSRKSKSSKASKAAKEAPVSASRPLSKTPPPFRN. Positions 15–27 are enriched in low complexity; the sequence is ASKAAKEAPVSAS. Zn(2+)-binding residues include cysteine 248, cysteine 315, cysteine 322, and cysteine 325. The disordered stretch occupies residues 1316 to 1336; it reads TRHNIDPSASNFAAFTRPDAD.

This sequence belongs to the RNA polymerase beta' chain family. RpoC2 subfamily. As to quaternary structure, in cyanobacteria the RNAP catalytic core is composed of 2 alpha, 1 beta, 1 beta', 1 gamma and 1 omega subunit. When a sigma factor is associated with the core the holoenzyme is formed, which can initiate transcription. It depends on Zn(2+) as a cofactor.

It carries out the reaction RNA(n) + a ribonucleoside 5'-triphosphate = RNA(n+1) + diphosphate. DNA-dependent RNA polymerase catalyzes the transcription of DNA into RNA using the four ribonucleoside triphosphates as substrates. The sequence is that of DNA-directed RNA polymerase subunit beta' from Synechococcus sp. (strain CC9605).